The chain runs to 375 residues: Putative prophage phiRv2 integrase (375 aa).

The Core-binding (CB) domain occupies Ala-75 to Leu-153. One can recognise a Tyr recombinase domain in the interval His-175–Ala-364. Residues Arg-209, His-316, Arg-319, and His-342 contribute to the active site. Tyr-351 functions as the O-(3'-phospho-DNA)-tyrosine intermediate in the catalytic mechanism.

This sequence belongs to the 'phage' integrase family.

In terms of biological role, integrase is necessary for integration of the phage into the host genome by site-specific recombination. In conjunction with excisionase, integrase is also necessary for excision of the prophage from the host genome. This Mycobacterium tuberculosis (strain CDC 1551 / Oshkosh) protein is Putative prophage phiRv2 integrase.